We begin with the raw amino-acid sequence, 260 residues long: Coiled-coil domain-containing protein 127 (260 aa).

Residues 76 to 139 adopt a coiled-coil conformation; that stretch reads AVISEHRRAV…EKSRLQPLRN (64 aa).

This Mus musculus (Mouse) protein is Coiled-coil domain-containing protein 127 (Ccdc127).